A 222-amino-acid polypeptide reads, in one-letter code: Phosphoribosylformylglycinamidine synthase subunit PurQ (222 aa).

Residues 3–222 (AAVVVFPGSN…RALAGALTPA (220 aa)) form the Glutamine amidotransferase type-1 domain. Residue C86 is the Nucleophile of the active site. Catalysis depends on residues H194 and E196.

In terms of assembly, part of the FGAM synthase complex composed of 1 PurL, 1 PurQ and 2 PurS subunits.

It is found in the cytoplasm. The catalysed reaction is N(2)-formyl-N(1)-(5-phospho-beta-D-ribosyl)glycinamide + L-glutamine + ATP + H2O = 2-formamido-N(1)-(5-O-phospho-beta-D-ribosyl)acetamidine + L-glutamate + ADP + phosphate + H(+). The enzyme catalyses L-glutamine + H2O = L-glutamate + NH4(+). Its pathway is purine metabolism; IMP biosynthesis via de novo pathway; 5-amino-1-(5-phospho-D-ribosyl)imidazole from N(2)-formyl-N(1)-(5-phospho-D-ribosyl)glycinamide: step 1/2. Its function is as follows. Part of the phosphoribosylformylglycinamidine synthase complex involved in the purines biosynthetic pathway. Catalyzes the ATP-dependent conversion of formylglycinamide ribonucleotide (FGAR) and glutamine to yield formylglycinamidine ribonucleotide (FGAM) and glutamate. The FGAM synthase complex is composed of three subunits. PurQ produces an ammonia molecule by converting glutamine to glutamate. PurL transfers the ammonia molecule to FGAR to form FGAM in an ATP-dependent manner. PurS interacts with PurQ and PurL and is thought to assist in the transfer of the ammonia molecule from PurQ to PurL. The sequence is that of Phosphoribosylformylglycinamidine synthase subunit PurQ from Ruegeria pomeroyi (strain ATCC 700808 / DSM 15171 / DSS-3) (Silicibacter pomeroyi).